A 750-amino-acid chain; its full sequence is GTP pyrophosphokinase rsh (750 aa).

Positions 45–144 (YFSHPLEVAA…VKLADRLHNM (100 aa)) constitute an HD domain. Positions 390 to 451 (DQVFCFTPKG…KNGDEVDIIR (62 aa)) constitute a TGS domain. The interval 587-613 (AAKVDPAATTPKPGKRALPIRGTNPDL) is disordered. Positions 676–750 (RISVSAINSP…SVSSAKRVNG (75 aa)) constitute an ACT domain.

Belongs to the RelA/SpoT family.

The catalysed reaction is GTP + ATP = guanosine 3'-diphosphate 5'-triphosphate + AMP. Functionally, functions as a (p)ppGpp synthase. In eubacteria ppGpp (guanosine 3'-diphosphate 5'-diphosphate) is a mediator of the stringent response that coordinates a variety of cellular activities in response to changes in nutritional abundance. It is necessary for persistence in mice, essential for intracellular growth of Brucella and required for expression of the type IV secretion system VirB and therefore plays a role in adaptation of Brucella to its intracellular host environment. This chain is GTP pyrophosphokinase rsh (rsh), found in Brucella suis biovar 1 (strain 1330).